The following is a 466-amino-acid chain: Vimentin (466 aa).

Composition is skewed to low complexity over residues 1–13 and 20–33; these read MSTR…SYRR and TSSR…YVTT. The interval 1 to 33 is disordered; the sequence is MSTRSVSSSSYRRMFGGSGTSSRPSSNRSYVTT. Ser2 is subject to N-acetylserine. The head stretch occupies residues 2-95; it reads STRSVSSSSY…FSLADAINTE (94 aa). Position 5 is a phosphoserine (Ser5). Ser7 is modified (phosphoserine; by PKA and PKC; alternate). O-linked (GlcNAc) serine; alternate glycosylation is present at Ser7. A Phosphoserine modification is found at Ser8. A phosphoserine; by PKC mark is found at Ser9 and Ser10. Thr20 carries the phosphothreonine modification. Ser21 carries the phosphoserine; by PKC modification. Ser25 is subject to Phosphoserine; by PKA and PKC. Residue Ser26 is modified to Phosphoserine; by PKC. O-linked (GlcNAc) threonine glycosylation occurs at Thr33. Ser34 is a glycosylation site (O-linked (GlcNAc) serine; alternate). Ser34 carries the phosphoserine; by PKC; alternate modification. The residue at position 39 (Ser39) is a Phosphoserine; by CaMK2, PKA, PKC and ROCK2. Ser42 carries the post-translational modification Phosphoserine; by PKC. Position 47 is a phosphoserine; by PKA (Ser47). Residue Ser49 is modified to Phosphoserine. Ser51 bears the Phosphoserine; by PKA and PKC mark. Tyr53 carries the post-translational modification Phosphotyrosine. Phosphoserine occurs at positions 55 and 56. Position 61 is a phosphotyrosine (Tyr61). Ser66 is subject to Phosphoserine; by PKA and PKC. Ser72 carries the phosphoserine; by AURKB and ROCK2 modification. Ser73 carries the phosphoserine modification. Ser83 carries the phosphoserine; by CaMK2 modification. Position 87 is a phosphoserine (Ser87). The tract at residues 96–131 is coil 1A; the sequence is FKNTRTNEKVELQELNDRFANYIDKVRFLEQQNKIL. Positions 96–131 form a coiled coil; the sequence is FKNTRTNEKVELQELNDRFANYIDKVRFLEQQNKIL. An IF rod domain is found at 103-411; sequence EKVELQELND…KLLEGEESRI (309 aa). Residue Lys104 forms a Glycyl lysine isopeptide (Lys-Gly) (interchain with G-Cter in SUMO2) linkage. Tyr117 is modified (phosphotyrosine). Residues Lys120, Lys129, and Lys139 each carry the N6-acetyllysine; alternate modification. N6-succinyllysine; alternate is present on residues Lys120 and Lys129. Glycyl lysine isopeptide (Lys-Gly) (interchain with G-Cter in SUMO2); alternate cross-links involve residues Lys120, Lys129, and Lys139. Positions 132-153 are linker 1; sequence LAELEQLKGQGKSRLGDLYEEE. Ser144 carries the post-translational modification Phosphoserine. Positions 154–245 form a coiled coil; that stretch reads MRELRRQVDQ…KLHDEEIQEL (92 aa). The tract at residues 154 to 245 is coil 1B; sequence MRELRRQVDQ…KLHDEEIQEL (92 aa). Lys168 is subject to N6-acetyllysine. N6-acetyllysine; alternate is present on Lys188. Lys188 carries the post-translational modification N6-succinyllysine; alternate. Phosphoserine is present on Ser214. Lys223 carries the post-translational modification N6-acetyllysine; alternate. Lys223 participates in a covalent cross-link: Glycyl lysine isopeptide (Lys-Gly) (interchain with G-Cter in SUMO2); alternate. Ser226 carries the phosphoserine modification. Lys235 carries the post-translational modification N6-acetyllysine. Residues 246–268 are linker 12; sequence QAQIQEQHVQIDVDVSKPDLTAA. A Glycyl lysine isopeptide (Lys-Gly) (interchain with G-Cter in SUMO2) cross-link involves residue Lys262. A coil 2 region spans residues 269–407; that stretch reads LRDVRQQYES…ATYRKLLEGE (139 aa). The residue at position 294 (Lys294) is an N6-acetyllysine; alternate. An N6-succinyllysine; alternate modification is found at Lys294. Lys294 is covalently cross-linked (Glycyl lysine isopeptide (Lys-Gly) (interchain with G-Cter in SUMO2); alternate). Ser299 carries the phosphoserine modification. Positions 303–407 form a coiled coil; the sequence is NRNNDALRQA…ATYRKLLEGE (105 aa). Lys313 participates in a covalent cross-link: Glycyl lysine isopeptide (Lys-Gly) (interchain with G-Cter in SUMO2). Ser325 carries the phosphoserine modification. The [IL]-x-C-x-x-[DE] motif signature appears at 326-329; the sequence is LTCE. Lys373 carries the post-translational modification N6-acetyllysine; alternate. Residue Lys373 forms a Glycyl lysine isopeptide (Lys-Gly) (interchain with G-Cter in SUMO2); alternate linkage. Residues 408-466 form a tail region; that stretch reads ESRISLPLPTFSSLNLRETNLESLPLVDTHSKRTLLIKTVETRDGQVINETSQHHDDLE. Phosphoserine occurs at positions 409, 412, 419, and 420. Thr426 carries the post-translational modification Phosphothreonine. Ser430 bears the Phosphoserine mark. Thr436 carries the phosphothreonine modification. Ser438 is subject to Phosphoserine. A Glycyl lysine isopeptide (Lys-Gly) (interchain with G-Cter in SUMO2) cross-link involves residue Lys439. Lys445 is modified (N6-acetyllysine; alternate). Position 445 is an N6-succinyllysine; alternate (Lys445). Lys445 is covalently cross-linked (Glycyl lysine isopeptide (Lys-Gly) (interchain with G-Cter in SUMO2); alternate). Lys445 participates in a covalent cross-link: Glycyl lysine isopeptide (Lys-Gly) (interchain with G-Cter in SUMO1); alternate. 2 positions are modified to phosphothreonine: Thr446 and Thr458. Residue Ser459 is modified to Phosphoserine.

This sequence belongs to the intermediate filament family. Homomer assembled from elementary dimers. Identified in complexes that contain VIM, EZR, AHNAK, BFSP1, BFSP2, ANK2, PLEC, PRX and spectrin. Interacts with BCAS3. Interacts with LGSN. Interacts with SYNM. Interacts (via rod region) with PLEC (via CH 1 domain). Interacts with PLEC isoform 1C. Interacts with STK33. Interacts with LARP6. Interacts with RAB8B. Interacts with TOR1A; the interaction associates TOR1A with the cytoskeleton. Interacts with TOR1AIP1. Interacts with DIAPH1. Interacts with EPPK1; interaction is dependent of higher-order structure of intermediate filament. Interacts with the non-receptor tyrosine kinase SRMS; the interaction leads to phosphorylation of VIM. Interacts with NOD2. Interacts (via head region) with CORO1C. Interacts with HDGF. Interacts with PRKCE (via phorbol-ester/DAG-type 2 domain). Interacts with BFSP2. Interacts with PPL. Interacts with PKP1 and PKP2. Interacts with SCRIB (via PDZ domains); the interaction protects SCRIB from proteasomal degradation and facilitates SCRIB localization to intermediate filaments, the interaction is reduced by cell contact inhibition. In terms of processing, phosphorylation by PKN1 inhibits the formation of filaments. Filament disassembly during mitosis is promoted by phosphorylation at Ser-55 as well as by nestin. One of the most prominent phosphoproteins in various cells of mesenchymal origin. Phosphorylation is enhanced during cell division, at which time vimentin filaments are significantly reorganized. Phosphorylated at Ser-56 by CDK5 during neutrophil secretion in the cytoplasm. Phosphorylated by STK33. Phosphorylated on tyrosine residues by SRMS. Post-translationally, S-nitrosylation is induced by interferon-gamma and oxidatively-modified low-densitity lipoprotein (LDL(ox)) possibly implicating the iNOS-S100A8/9 transnitrosylase complex. Detected in eye lens fiber cells (at protein level). Expressed in retinal lens epithelial cells (at protein level). Expressed in Langerhans cells in the epidermis (at protein level).

The protein localises to the cytoplasm. It localises to the cytoskeleton. The protein resides in the nucleus matrix. It is found in the cell membrane. Its function is as follows. Vimentins are class-III intermediate filaments found in various non-epithelial cells, especially mesenchymal cells. Vimentin is attached to the nucleus, endoplasmic reticulum, and mitochondria, either laterally or terminally. Plays a role in cell directional movement, orientation, cell sheet organization and Golgi complex polarization at the cell migration front. Protects SCRIB from proteasomal degradation and facilitates its localization to intermediate filaments in a cell contact-mediated manner. Functionally, involved with LARP6 in the stabilization of type I collagen mRNAs for CO1A1 and CO1A2. In Mus musculus (Mouse), this protein is Vimentin.